Consider the following 141-residue polypeptide: Hemoglobin subunit alpha (141 aa).

Residues 1–141 form the Globin domain; it reads VLSPADKTNL…VSTVLTSKYR (141 aa). S3 is modified (phosphoserine). At K7 the chain carries N6-succinyllysine. T8 is subject to Phosphothreonine. K11 is modified (N6-succinyllysine). K16 carries the post-translational modification N6-acetyllysine; alternate. The residue at position 16 (K16) is an N6-succinyllysine; alternate. Y24 carries the post-translational modification Phosphotyrosine. At K40 the chain carries N6-succinyllysine. At S49 the chain carries Phosphoserine. H58 contributes to the O2 binding site. H87 is a heme b binding site. S102 carries the post-translational modification Phosphoserine. T108 bears the Phosphothreonine mark. S124 carries the post-translational modification Phosphoserine. 2 positions are modified to phosphothreonine: T134 and T137. At S138 the chain carries Phosphoserine.

This sequence belongs to the globin family. Heterotetramer of two alpha chains and two beta chains. In terms of tissue distribution, red blood cells.

Functionally, involved in oxygen transport from the lung to the various peripheral tissues. The sequence is that of Hemoglobin subunit alpha from Tamias striatus (Eastern chipmunk).